Reading from the N-terminus, the 156-residue chain is Small ribosomal subunit protein uS7 (156 aa).

Belongs to the universal ribosomal protein uS7 family. Part of the 30S ribosomal subunit. Contacts proteins S9 and S11.

One of the primary rRNA binding proteins, it binds directly to 16S rRNA where it nucleates assembly of the head domain of the 30S subunit. Is located at the subunit interface close to the decoding center, probably blocks exit of the E-site tRNA. In Geobacillus thermodenitrificans (strain NG80-2), this protein is Small ribosomal subunit protein uS7.